Reading from the N-terminus, the 148-residue chain is Ribonuclease 4 (148 aa).

The N-terminal stretch at 1 to 29 (MMDLQRTQSLLLLLVLTLLGLGLVQPSYG) is a signal peptide. Gln-30 is subject to Pyrrolidone carboxylic acid. DUMP contacts are provided by Arg-36, His-41, Lys-69, Asn-72, and Thr-73. His-41 serves as the catalytic Proton acceptor. Disulfide bonds link Cys-54/Cys-110, Cys-68/Cys-121, Cys-86/Cys-136, and Cys-93/Cys-100. His-145 acts as the Proton donor in catalysis. Phe-146 lines the dUMP pocket.

This sequence belongs to the pancreatic ribonuclease family. Expressed in the cortical tubules of the kidney (at protein level). Also expressed in the medullary tubules of the kidney.

Its subcellular location is the secreted. In terms of biological role, cleaves preferentially after uridine bases. Has antimicrobial activity against uropathogenic E.coli (UPEC). Probably contributes to urinary tract sterility. This is Ribonuclease 4 (Rnase4) from Mus musculus (Mouse).